Here is a 370-residue protein sequence, read N- to C-terminus: Anhydro-N-acetylmuramic acid kinase (370 aa).

13–20 contributes to the ATP binding site; that stretch reads GTSLDGVD.

It belongs to the anhydro-N-acetylmuramic acid kinase family.

The enzyme catalyses 1,6-anhydro-N-acetyl-beta-muramate + ATP + H2O = N-acetyl-D-muramate 6-phosphate + ADP + H(+). Its pathway is amino-sugar metabolism; 1,6-anhydro-N-acetylmuramate degradation. It functions in the pathway cell wall biogenesis; peptidoglycan recycling. Its function is as follows. Catalyzes the specific phosphorylation of 1,6-anhydro-N-acetylmuramic acid (anhMurNAc) with the simultaneous cleavage of the 1,6-anhydro ring, generating MurNAc-6-P. Is required for the utilization of anhMurNAc either imported from the medium or derived from its own cell wall murein, and thus plays a role in cell wall recycling. The chain is Anhydro-N-acetylmuramic acid kinase from Vibrio cholerae serotype O1 (strain ATCC 39315 / El Tor Inaba N16961).